The chain runs to 224 residues: Ribonuclease 3 (224 aa).

In terms of domain architecture, RNase III spans 4-126 (LDRLQRQISY…IIGAISLDSS (123 aa)). Residue Glu-39 participates in Mg(2+) binding. The active site involves Asp-43. Mg(2+) contacts are provided by Asp-112 and Glu-115. The active site involves Glu-115. The region spanning 153–223 (DPKTRLQEYL…AEQILTALEI (71 aa)) is the DRBM domain.

Belongs to the ribonuclease III family. As to quaternary structure, homodimer. The cofactor is Mg(2+).

It is found in the cytoplasm. It catalyses the reaction Endonucleolytic cleavage to 5'-phosphomonoester.. Functionally, digests double-stranded RNA. Involved in the processing of primary rRNA transcript to yield the immediate precursors to the large and small rRNAs (23S and 16S). Processes some mRNAs, and tRNAs when they are encoded in the rRNA operon. Processes pre-crRNA and tracrRNA of type II CRISPR loci if present in the organism. The protein is Ribonuclease 3 of Mannheimia succiniciproducens (strain KCTC 0769BP / MBEL55E).